The chain runs to 434 residues: UPF0597 protein CLB_1949 (434 aa).

It belongs to the UPF0597 family.

In Clostridium botulinum (strain ATCC 19397 / Type A), this protein is UPF0597 protein CLB_1949.